Consider the following 284-residue polypeptide: Bifunctional protein FolD (284 aa).

NADP(+) contacts are provided by residues 166 to 168 and I232; that span reads GAS.

Belongs to the tetrahydrofolate dehydrogenase/cyclohydrolase family. In terms of assembly, homodimer.

It catalyses the reaction (6R)-5,10-methylene-5,6,7,8-tetrahydrofolate + NADP(+) = (6R)-5,10-methenyltetrahydrofolate + NADPH. It carries out the reaction (6R)-5,10-methenyltetrahydrofolate + H2O = (6R)-10-formyltetrahydrofolate + H(+). Its pathway is one-carbon metabolism; tetrahydrofolate interconversion. Catalyzes the oxidation of 5,10-methylenetetrahydrofolate to 5,10-methenyltetrahydrofolate and then the hydrolysis of 5,10-methenyltetrahydrofolate to 10-formyltetrahydrofolate. The chain is Bifunctional protein FolD from Pseudoalteromonas translucida (strain TAC 125).